The sequence spans 391 residues: DNA/RNA-binding protein KIN17 (391 aa).

The C2H2-type zinc finger occupies 28 to 50; the sequence is CQMCQKQCRDENGFKCHCMSESH. The interval 51 to 160 is winged helix-turn-helix (wHTH); sequence QRQLLLASEN…RQLELEKKKK (110 aa). Lys-135 carries the N6,N6,N6-trimethyllysine; by METTL22; alternate modification. Lys-135 bears the N6-methyllysine; alternate mark. Coiled coils occupy residues 147–180 and 252–275; these read ETIR…VRRG and AKKK…TART. Residues 206 to 258 form a disordered region; that stretch reads NLNKGAGGSAGATTSKSSSLGPSALKLLGSAASGKRKESSQSSAQPAKKKKSA. Positions 282 to 332 are C-terminal subdomain A; it reads GIVVKIITKKLGEKYHKKKGVVKEVIDRYTAVVKMTDSGDRLKLDQTHLET. Residues 338 to 389 are C-terminal subdomain B; that stretch reads GKRVLVLNGGYRGNEGTLESINEKAFSATIVIETGPLKGRRVEGIQYEDISK.

The protein belongs to the KIN17 family. In terms of assembly, associated with DNA polymerase alpha, RFC1 and cyclin A, in multiprotein DNA replication complexes. Also associates with replication origins at the G1/S phase boundary and throughout the S phase in vivo. As to expression, highly expressed in transformed mouse AtT20 neuroendocrine cells. Expressed at a lower level in testis, kidney, skeletal muscle, liver, lung, spleen, brain and heart and kidney. In testis, expressed at much higher levels in proliferating cells than in differentiating cells. Not detected in embryo.

The protein resides in the nucleus. It is found in the cytoplasm. Its function is as follows. Involved in DNA replication and the cellular response to DNA damage. May participate in DNA replication factories and create a bridge between DNA replication and repair mediated by high molecular weight complexes. May play a role in illegitimate recombination and regulation of gene expression. May participate in mRNA processing. Binds, in vitro, to double-stranded DNA. Also shown to bind preferentially to curved DNA in vitro and in vivo. Binds via its C-terminal domain to RNA in vitro. The chain is DNA/RNA-binding protein KIN17 from Mus musculus (Mouse).